The sequence spans 138 residues: NADPH-dependent 7-cyano-7-deazaguanine reductase (138 aa).

Cys-53 (thioimide intermediate) is an active-site residue. Asp-60 (proton donor) is an active-site residue. Substrate-binding positions include 75–77 (VEL) and 94–95 (HE).

It belongs to the GTP cyclohydrolase I family. QueF type 1 subfamily.

It localises to the cytoplasm. It carries out the reaction 7-aminomethyl-7-carbaguanine + 2 NADP(+) = 7-cyano-7-deazaguanine + 2 NADPH + 3 H(+). Its pathway is tRNA modification; tRNA-queuosine biosynthesis. Catalyzes the NADPH-dependent reduction of 7-cyano-7-deazaguanine (preQ0) to 7-aminomethyl-7-deazaguanine (preQ1). The polypeptide is NADPH-dependent 7-cyano-7-deazaguanine reductase (Gloeothece citriformis (strain PCC 7424) (Cyanothece sp. (strain PCC 7424))).